Here is a 108-residue protein sequence, read N- to C-terminus: UPF0060 membrane protein Mfla_0485 (108 aa).

The next 4 helical transmembrane spans lie at 7 to 27 (FSLFILTALAEILGCYLPYLW), 33 to 53 (SVWLLLPAAISLAVFAWLLSL), 63 to 83 (AAYGGVYIFVALGWLWLVDGI), and 87 to 107 (TWDFVGVGVALAGMAIIMFAP).

This sequence belongs to the UPF0060 family.

Its subcellular location is the cell inner membrane. The chain is UPF0060 membrane protein Mfla_0485 from Methylobacillus flagellatus (strain ATCC 51484 / DSM 6875 / VKM B-1610 / KT).